The following is a 453-amino-acid chain: UDP-N-acetylmuramoylalanine--D-glutamate ligase (453 aa).

117–123 (GTNGKTT) contacts ATP.

Belongs to the MurCDEF family.

It localises to the cytoplasm. The catalysed reaction is UDP-N-acetyl-alpha-D-muramoyl-L-alanine + D-glutamate + ATP = UDP-N-acetyl-alpha-D-muramoyl-L-alanyl-D-glutamate + ADP + phosphate + H(+). It functions in the pathway cell wall biogenesis; peptidoglycan biosynthesis. Its function is as follows. Cell wall formation. Catalyzes the addition of glutamate to the nucleotide precursor UDP-N-acetylmuramoyl-L-alanine (UMA). The polypeptide is UDP-N-acetylmuramoylalanine--D-glutamate ligase (Caldicellulosiruptor saccharolyticus (strain ATCC 43494 / DSM 8903 / Tp8T 6331)).